A 263-amino-acid chain; its full sequence is Small ribosomal subunit protein eS4 (263 aa).

Residues 42-104 (LPLIVFLRNR…TGEHFRLVYD (63 aa)) enclose the S4 RNA-binding domain.

It belongs to the eukaryotic ribosomal protein eS4 family.

This chain is Small ribosomal subunit protein eS4 (RPS4Y1), found in Pan paniscus (Pygmy chimpanzee).